We begin with the raw amino-acid sequence, 319 residues long: Transmembrane and ubiquitin-like domain-containing protein 2 (319 aa).

The helical transmembrane segment at 36 to 56 (VMVVAGVVALTLALVLAWLST) threads the bilayer. 2 disordered regions span residues 88–128 (VNQG…ARGE) and 145–165 (RQAG…DGSC). Over residues 95–111 (PTEHPHPSGGNDDKAEE) the composition is skewed to basic and acidic residues. A Ubiquitin-like domain is found at 173–246 (INVRLKFLND…IHCHRSPPGA (74 aa)). A run of 2 helical transmembrane segments spans residues 264 to 284 (LGVN…GVVW) and 298 to 318 (ATIS…GMYG).

The protein resides in the membrane. This chain is Transmembrane and ubiquitin-like domain-containing protein 2 (Tmub2), found in Mus musculus (Mouse).